Consider the following 98-residue polypeptide: NADH-ubiquinone oxidoreductase chain 4L (98 aa).

3 helical membrane passes run 1 to 21 (MIPT…GMLT), 27 to 47 (VASL…ATLI), and 61 to 81 (IILL…LISI).

Belongs to the complex I subunit 4L family. Core subunit of respiratory chain NADH dehydrogenase (Complex I) which is composed of 45 different subunits.

The protein resides in the mitochondrion inner membrane. The catalysed reaction is a ubiquinone + NADH + 5 H(+)(in) = a ubiquinol + NAD(+) + 4 H(+)(out). Functionally, core subunit of the mitochondrial membrane respiratory chain NADH dehydrogenase (Complex I) which catalyzes electron transfer from NADH through the respiratory chain, using ubiquinone as an electron acceptor. Part of the enzyme membrane arm which is embedded in the lipid bilayer and involved in proton translocation. The sequence is that of NADH-ubiquinone oxidoreductase chain 4L (MT-ND4L) from Macaca hecki (Heck's macaque).